We begin with the raw amino-acid sequence, 757 residues long: Elongation factor G, mitochondrial (757 aa).

In terms of domain architecture, tr-type G spans 66-344 (DRMRNIGISA…VLDYLPCPME (279 aa)). GTP-binding positions include 75-82 (AHIDSGKT), 142-146 (DTPGH), and 196-199 (NKLD).

This sequence belongs to the TRAFAC class translation factor GTPase superfamily. Classic translation factor GTPase family. EF-G/EF-2 subfamily.

The protein localises to the mitochondrion. Its pathway is protein biosynthesis; polypeptide chain elongation. Mitochondrial GTPase that catalyzes the GTP-dependent ribosomal translocation step during translation elongation. During this step, the ribosome changes from the pre-translocational (PRE) to the post-translocational (POST) state as the newly formed A-site-bound peptidyl-tRNA and P-site-bound deacylated tRNA move to the P and E sites, respectively. Catalyzes the coordinated movement of the two tRNA molecules, the mRNA and conformational changes in the ribosome. This is Elongation factor G, mitochondrial from Oryza sativa subsp. japonica (Rice).